The primary structure comprises 513 residues: Membrane protein (513 aa).

4 tandem repeats follow at residues 9–11 (PSA), 12–14 (PSA), 15–17 (PSA), and 18–20 (PSA). Positions 9-20 (PSAPSAPSAPSA) are 4 X 3 AA tandem repeats of P-S-A. The next 14 helical transmembrane spans lie at 32–52 (LTLHWGLFAAVAALLVVLAIP), 56–76 (GLTVAGQRMLAILAFAIVVWI), 79–99 (AVSYETSAIMITSLMAGLIGF), 126–146 (TALALVAAALFISAAMTVTGL), 165–185 (ILIGTIAVTIALSLVVPSATA), 208–228 (NIAAGIMITVAQATSIWNVGI), 254–274 (QWLIAGAPWAIAMSVVLYFLV), 309–329 (LAAVSLGLLLFWATEGKLHSF), 332–352 (ATVTFVGLVILMMPRIGVMDW), 360–380 (PWGTLIVFGVGISLGTALLST), 400–420 (GALLVFAILSAFLILIHLGFA), 422–442 (ATALTAALLPILIAVLQTLPG), 447–467 (VGMTMLLGFTVSFGFILPINA), and 487–507 (IGIPVTIIGYAMMLLFAATYW).

This sequence belongs to the SLC13A/DASS transporter (TC 2.A.47) family. DIT1 subfamily.

The protein localises to the cell membrane. In Cupriavidus necator (strain ATCC 17699 / DSM 428 / KCTC 22496 / NCIMB 10442 / H16 / Stanier 337) (Ralstonia eutropha), this protein is Membrane protein.